The sequence spans 123 residues: Small ribosomal subunit protein uS12 (123 aa).

The segment at 1–28 is disordered; the sequence is MPTIQQLIRTERSKVQKKTKSPALKQCP. Position 89 is a 3-methylthioaspartic acid (aspartate 89). The tract at residues 104 to 123 is disordered; the sequence is ATGVKDRKQGRSKYGTKRPK. Basic residues predominate over residues 113–123; that stretch reads GRSKYGTKRPK.

It belongs to the universal ribosomal protein uS12 family. Part of the 30S ribosomal subunit. Contacts proteins S8 and S17. May interact with IF1 in the 30S initiation complex.

With S4 and S5 plays an important role in translational accuracy. Functionally, interacts with and stabilizes bases of the 16S rRNA that are involved in tRNA selection in the A site and with the mRNA backbone. Located at the interface of the 30S and 50S subunits, it traverses the body of the 30S subunit contacting proteins on the other side and probably holding the rRNA structure together. The combined cluster of proteins S8, S12 and S17 appears to hold together the shoulder and platform of the 30S subunit. The protein is Small ribosomal subunit protein uS12 of Gloeothece citriformis (strain PCC 7424) (Cyanothece sp. (strain PCC 7424)).